Consider the following 100-residue polypeptide: NADH-quinone oxidoreductase subunit K (100 aa).

3 helical membrane passes run 4–24 (YEYY…GVIV), 28–48 (IIAM…AFVA), and 60–80 (VFVF…LGLI).

The protein belongs to the complex I subunit 4L family. As to quaternary structure, NDH-1 is composed of 14 different subunits. Subunits NuoA, H, J, K, L, M, N constitute the membrane sector of the complex.

The protein localises to the cell inner membrane. It catalyses the reaction a quinone + NADH + 5 H(+)(in) = a quinol + NAD(+) + 4 H(+)(out). NDH-1 shuttles electrons from NADH, via FMN and iron-sulfur (Fe-S) centers, to quinones in the respiratory chain. The immediate electron acceptor for the enzyme in this species is believed to be ubiquinone. Couples the redox reaction to proton translocation (for every two electrons transferred, four hydrogen ions are translocated across the cytoplasmic membrane), and thus conserves the redox energy in a proton gradient. In Sulfurihydrogenibium azorense (strain DSM 15241 / OCM 825 / Az-Fu1), this protein is NADH-quinone oxidoreductase subunit K.